The sequence spans 114 residues: Cuticle protein CP1158 (114 aa).

Position 1 is a pyrrolidone carboxylic acid (Q1). 4 repeat units span residues 1–17 (QVGY…NIQF), 26–43 (VLKG…NLQL), 70–87 (SVVG…VQFS), and 95–112 (VLVG…NLQL).

Calcified shell.

This chain is Cuticle protein CP1158, found in Cancer pagurus (Rock crab).